The primary structure comprises 968 residues: MDSTLTASKIRQRFIDFFKRNEHTYIHSSATIPLDDPTLLFANAGMNQFKPIFLNTIDPSHPMAKPSRAANTQKCIRAGGKHNDLDDVGKDVYHHTFFEMLGSWSFGDYFKELACKMALELLTQEFGIPIERLYVTYFGGDEAAGLEPDLECKQIWQNLGLDDTKILPGNMKDNFWEMGDTGPCGPCSEIHYDRIGGRDAAHLVNQDDPNVLEIWNLVFIQYNREADGILKPLPKKSIDTGMGLERLVSVLQNKMSNYDTDLFVPYFEAIQKGTGARPYTGKVGAEDADGIDMAYRVLADHARTITVALADGGRPDNTGRGYVLRRILRRAVRYAHEKLNASRGFFATLVDVVVQSLGDAFPELKKDPDMVKDIINEEEVQFLKTLSRGRRILDRKIQSLGDSKTIPGDTAWLLYDTYGFPVDLTGLIAEEKGLVVDMDGFEEERKLAQLKSQGKGAGGEDLIMLDIYAIEELRARDLEVTDDSPKYNYHLDSSGSYVFENTVATVMALRREKMFVEEVSTGQECGVVLDKTCFYAEQGGQIYDEGYLVKVDDSSEDKTEFTVKNAQVRGGYVLHIGTIYGDLKVGDQVWLFIDEPRRRPIMSNHTATHILNFALRSVLGEADQKGSLVAPDRLRFDFTAKGAMSTQQIKKAEEIANEMIEAAKPVYTQDCSLAAAKAIQGLRAVFDETYPDPVRVVSIGVPVSELLDDPSGPAGSLTSVEFCGGTHLRNSSHAGAFVIVTEEAIAKGIRRIVAVTGAEAQKALRKAGSLKKPLSVMEAKVKAQTAPNKDVQREIADLGEALATAVIPQWQKDELRETLKSLKKVMDDLDRASKADVQKRVLEKTKQLIDSNPNQPLVILEMESGASAKALNEALKLFKMHSPQTAAMLFTVDNEAGKITCLCQVPQNAANRGLKASEWVQQVSGLMDGKGGGKDVSAQATGKNVGCLQEALQLATSFAQLRLGDVKN.

Residue Met1 is modified to N-acetylmethionine. Phosphoserine is present on residues Ser3 and Ser8. Lys19 carries the post-translational modification N6-acetyllysine. Residues Arg77, His95, Trp176, and 214–216 (IWN) each bind ATP. Asn216 and Asp239 together coordinate L-alanine. Gly243 provides a ligand contact to ATP. 2 positions are modified to phosphoserine: Ser399 and Ser555. Positions 605, 609, 723, and 727 each coordinate Zn(2+). A Nuclear localization signal motif is present at residues 750-763 (RRIVAVTGAEAQKA). N6-acetyllysine is present on Lys876. Residue Lys943 is modified to N6,N6,N6-trimethyllysine; alternate. Lys943 carries the post-translational modification N6,N6-dimethyllysine; alternate. N6-methyllysine; alternate is present on Lys943.

This sequence belongs to the class-II aminoacyl-tRNA synthetase family. In terms of assembly, monomer. Interacts with ANKRD16; the interaction is direct. Requires Zn(2+) as cofactor. Post-translationally, ISGylated. In terms of processing, methylation at 'Lys-943' by METTL21C.

Its subcellular location is the cytoplasm. It localises to the nucleus. The enzyme catalyses tRNA(Ala) + L-alanine + ATP = L-alanyl-tRNA(Ala) + AMP + diphosphate. It catalyses the reaction (S)-lactate + ATP + H(+) = (S)-lactoyl-AMP + diphosphate. The catalysed reaction is (S)-lactoyl-AMP + L-lysyl-[protein] = N(6)-[(S)-lactoyl]-L-lysyl-[protein] + AMP + 2 H(+). Its activity is regulated as follows. The protein lactyltransferase activity is inhibited by beta-alanine. Its function is as follows. Catalyzes the attachment of alanine to tRNA(Ala) in a two-step reaction: alanine is first activated by ATP to form Ala-AMP and then transferred to the acceptor end of tRNA(Ala). Also edits incorrectly charged tRNA(Ala) via its editing domain. In presence of high levels of lactate, also acts as a protein lactyltransferase that mediates lactylation of lysine residues in target proteins, such as TEAD1, TP53/p53 and YAP1. Protein lactylation takes place in a two-step reaction: lactate is first activated by ATP to form lactate-AMP and then transferred to lysine residues of target proteins. Acts as an inhibitor of TP53/p53 activity by catalyzing lactylation of TP53/p53. Acts as a positive regulator of the Hippo pathway by mediating lactylation of TEAD1 and YAP1. This is Alanine--tRNA ligase, cytoplasmic (AARS1) from Pongo abelii (Sumatran orangutan).